The chain runs to 66 residues: Large ribosomal subunit protein bL33c (66 aa).

It belongs to the bacterial ribosomal protein bL33 family.

Its subcellular location is the plastid. It localises to the chloroplast. This chain is Large ribosomal subunit protein bL33c, found in Aethionema cordifolium (Lebanon stonecress).